Consider the following 210-residue polypeptide: Protein GET1 (210 aa).

At 1–4 the chain is on the lumenal side; it reads MPSL. The helical transmembrane segment at 5 to 24 threads the bilayer; it reads LIIVLIIHVVTYLINTIGAN. The Cytoplasmic segment spans residues 25–110; it reads TIDSLLWLLY…SFDLAVKSIR (86 aa). Positions 39–95 form a coiled coil; the sequence is NQTSQTANEQRRLKREVMQLKREMNATSSQDEFAKWAKLRRRHDKTMEEYEAKNKAL. Residues 111–131 traverse the membrane as a helical segment; it reads FFSTTGLKLFLQFWCSKTPIF. The Lumenal segment spans residues 132 to 155; that stretch reads ELPRGWIPWQVEWVLSFPRAPLGT. The helical transmembrane segment at 156–172 threads the bilayer; the sequence is VSIQIWGGVCATVVSLA. Topologically, residues 173–210 are cytoplasmic; that stretch reads GDAIGVVNVYLTSKAPKQKEPATSGENSARPMAIKKEL. Positions 189 to 210 are disordered; that stretch reads KQKEPATSGENSARPMAIKKEL.

This sequence belongs to the WRB/GET1 family. Interacts with GET3.

The protein resides in the endoplasmic reticulum membrane. Required for the post-translational delivery of tail-anchored (TA) proteins to the endoplasmic reticulum. Acts as a membrane receptor for soluble GET3, which recognizes and selectively binds the transmembrane domain of TA proteins in the cytosol. The polypeptide is Protein GET1 (Coccidioides immitis (strain RS) (Valley fever fungus)).